The chain runs to 388 residues: MAYSARLRKAVGAVRATLSAVELCDVQAPEFAQHGDHAVAADAPLVLVACSGGRDSMALAAVSHIVCTSMGVRCGAVIVDHGLQEGSEQVAGEAANRCRALGLGPVIVRNATVQARGEGLEAAARQARYNELCAAARESGAIAVLLAHTMDDQAETVLIGLLRSRGVDALAGMPQVFTRSGVTFARPLLTLTRAETTGICEDLGVEYWDDPTNGDAVDGELPNDYPLRSRVRHDLLPAIERFAGFNVARHFAESARLARMDKEYLDQRSDEVMGEAVTTVDWPASSAAVSTDTPRACAAGDTNDSSHGVGLMISVRRIAREPEAIRLRVIAHALSQAGVNASAAQIAAIDRLVVDWHGQGGVSLPRGYSANRKKHVIRVCQDGAHANR.

51–56 (SGGRDS) contributes to the ATP binding site.

This sequence belongs to the tRNA(Ile)-lysidine synthase family.

It is found in the cytoplasm. The catalysed reaction is cytidine(34) in tRNA(Ile2) + L-lysine + ATP = lysidine(34) in tRNA(Ile2) + AMP + diphosphate + H(+). Its function is as follows. Ligates lysine onto the cytidine present at position 34 of the AUA codon-specific tRNA(Ile) that contains the anticodon CAU, in an ATP-dependent manner. Cytidine is converted to lysidine, thus changing the amino acid specificity of the tRNA from methionine to isoleucine. The chain is tRNA(Ile)-lysidine synthase from Bifidobacterium longum subsp. infantis (strain ATCC 15697 / DSM 20088 / JCM 1222 / NCTC 11817 / S12).